Here is a 671-residue protein sequence, read N- to C-terminus: Phosphoenolpyruvate carboxykinase (ATP) 1 (671 aa).

The span at 1-10 (MSAGNGNATN) shows a compositional bias: low complexity. A disordered region spans residues 1–44 (MSAGNGNATNGDGGFSFPKGPVMPKITTGAAKRGSGVCHDDSGP). Position 2 is an N-acetylserine (serine 2). Residue serine 62 is modified to Phosphoserine. At threonine 66 the chain carries Phosphothreonine. Residues 100 to 127 (TRESGPKVVRGDPAEKKTDGSTTPAYAH) are disordered. Residues 108–118 (VRGDPAEKKTD) show a composition bias toward basic and acidic residues. Substrate is bound at residue arginine 189. Histidine 270 and asparagine 271 together coordinate Ca(2+). Tyrosine 328 and lysine 334 together coordinate substrate. ATP-binding positions include lysine 334, histidine 353, and 369-377 (GLSGTGKTT). 2 residues coordinate Mn(2+): lysine 334 and histidine 353. Position 390 (aspartate 390) interacts with Mn(2+). Glycine 404 is a binding site for Ca(2+). ATP contacts are provided by residues glutamate 418, arginine 455, 574-575 (RI), isoleucine 575, and threonine 580. Arginine 455 is a substrate binding site.

The protein belongs to the phosphoenolpyruvate carboxykinase (ATP) family. In terms of assembly, monomer. Requires Mn(2+) as cofactor. Expressed in cotyledons, flowers, siliques, seeds, leaves, stems and roots. Localized in mid-veins.

Its subcellular location is the cytoplasm. It catalyses the reaction oxaloacetate + ATP = phosphoenolpyruvate + ADP + CO2. The protein operates within carbohydrate biosynthesis; gluconeogenesis. Its activity is regulated as follows. Allosterically activated by calcium. It may represent the only case of a monomeric, allosteric enzyme. In terms of biological role, involved in the gluconeogenesis. Catalyzes the conversion of oxaloacetate (OAA) to phosphoenolpyruvate (PEP) through direct phosphoryl transfer between the nucleoside triphosphate and OAA. This Arabidopsis thaliana (Mouse-ear cress) protein is Phosphoenolpyruvate carboxykinase (ATP) 1.